A 314-amino-acid chain; its full sequence is Porphobilinogen deaminase (314 aa).

At cysteine 249 the chain carries S-(dipyrrolylmethanemethyl)cysteine.

The protein belongs to the HMBS family. As to quaternary structure, monomer. The cofactor is dipyrromethane.

It carries out the reaction 4 porphobilinogen + H2O = hydroxymethylbilane + 4 NH4(+). The protein operates within porphyrin-containing compound metabolism; protoporphyrin-IX biosynthesis; coproporphyrinogen-III from 5-aminolevulinate: step 2/4. Tetrapolymerization of the monopyrrole PBG into the hydroxymethylbilane pre-uroporphyrinogen in several discrete steps. The sequence is that of Porphobilinogen deaminase from Brucella anthropi (strain ATCC 49188 / DSM 6882 / CCUG 24695 / JCM 21032 / LMG 3331 / NBRC 15819 / NCTC 12168 / Alc 37) (Ochrobactrum anthropi).